A 362-amino-acid polypeptide reads, in one-letter code: Phosphoserine aminotransferase (362 aa).

Position 42 (R42) interacts with L-glutamate. Pyridoxal 5'-phosphate is bound by residues W102, T154, D174, and Q197. K198 carries the post-translational modification N6-(pyridoxal phosphate)lysine. 239 to 240 (NT) lines the pyridoxal 5'-phosphate pocket.

Belongs to the class-V pyridoxal-phosphate-dependent aminotransferase family. SerC subfamily. As to quaternary structure, homodimer. Pyridoxal 5'-phosphate serves as cofactor.

It localises to the cytoplasm. It catalyses the reaction O-phospho-L-serine + 2-oxoglutarate = 3-phosphooxypyruvate + L-glutamate. The enzyme catalyses 4-(phosphooxy)-L-threonine + 2-oxoglutarate = (R)-3-hydroxy-2-oxo-4-phosphooxybutanoate + L-glutamate. Its pathway is amino-acid biosynthesis; L-serine biosynthesis; L-serine from 3-phospho-D-glycerate: step 2/3. It functions in the pathway cofactor biosynthesis; pyridoxine 5'-phosphate biosynthesis; pyridoxine 5'-phosphate from D-erythrose 4-phosphate: step 3/5. Functionally, catalyzes the reversible conversion of 3-phosphohydroxypyruvate to phosphoserine and of 3-hydroxy-2-oxo-4-phosphonooxybutanoate to phosphohydroxythreonine. This chain is Phosphoserine aminotransferase, found in Haemophilus ducreyi (strain 35000HP / ATCC 700724).